A 186-amino-acid polypeptide reads, in one-letter code: Peptidyl-tRNA hydrolase (186 aa).

Tyrosine 13 lines the tRNA pocket. The Proton acceptor role is filled by histidine 18. Tyrosine 59, asparagine 61, and asparagine 107 together coordinate tRNA.

It belongs to the PTH family. In terms of assembly, monomer.

Its subcellular location is the cytoplasm. It carries out the reaction an N-acyl-L-alpha-aminoacyl-tRNA + H2O = an N-acyl-L-amino acid + a tRNA + H(+). Its function is as follows. Hydrolyzes ribosome-free peptidyl-tRNAs (with 1 or more amino acids incorporated), which drop off the ribosome during protein synthesis, or as a result of ribosome stalling. Functionally, catalyzes the release of premature peptidyl moieties from peptidyl-tRNA molecules trapped in stalled 50S ribosomal subunits, and thus maintains levels of free tRNAs and 50S ribosomes. The protein is Peptidyl-tRNA hydrolase of Thermotoga sp. (strain RQ2).